Reading from the N-terminus, the 1071-residue chain is DNA-directed RNA polymerase subunit beta (1071 aa).

The protein belongs to the RNA polymerase beta chain family. In terms of assembly, in plastids the minimal PEP RNA polymerase catalytic core is composed of four subunits: alpha, beta, beta', and beta''. When a (nuclear-encoded) sigma factor is associated with the core the holoenzyme is formed, which can initiate transcription.

Its subcellular location is the plastid. It localises to the chloroplast. The enzyme catalyses RNA(n) + a ribonucleoside 5'-triphosphate = RNA(n+1) + diphosphate. Its function is as follows. DNA-dependent RNA polymerase catalyzes the transcription of DNA into RNA using the four ribonucleoside triphosphates as substrates. The chain is DNA-directed RNA polymerase subunit beta from Acorus calamus (Sweet flag).